Here is an 842-residue protein sequence, read N- to C-terminus: Gamma-aminobutyric acid type B receptor subunit 2 (842 aa).

Positions 1 to 17 (MSRWLSLLLFAVQAVGG) are cleaved as a signal peptide. The Extracellular segment spans residues 18–438 (YEAGEELSCK…TERRREHISS (421 aa)). 4 N-linked (GlcNAc...) asparagine glycosylation sites follow: asparagine 274, asparagine 279, asparagine 327, and asparagine 366. Residues 439–459 (ILFLAMSLLALIGIFLALIFL) form a helical membrane-spanning segment. The Cytoplasmic portion of the chain corresponds to 460 to 477 (LINFRYRNHRFIKMSSPN). The chain crosses the membrane as a helical span at residues 478 to 498 (LNNIIIAGSICTFASVIMLGL). The Extracellular portion of the chain corresponds to 499–506 (DTRIVSPD). The chain crosses the membrane as a helical span at residues 507 to 527 (VFVWLCYTKTWTLCIGFTLSF). Residues 528–556 (GAMFSKTWRVHSIFTNIRMDRKAIKDSKL) lie on the Cytoplasmic side of the membrane. Residues 557–577 (FIILGILLFIDICVLVTWAFV) form a helical membrane-spanning segment. Topologically, residues 578 to 610 (SPFSYTVTELPHIPEDNIVIIPEVEKCNSSHSG) are extracellular. Asparagine 605 is a glycosylation site (N-linked (GlcNAc...) asparagine). The chain crosses the membrane as a helical span at residues 611 to 631 (VFQAVLYAVKGVLMILGCFLA). Over 632–647 (WETRHVNVPALNDSKY) the chain is Cytoplasmic. The chain crosses the membrane as a helical span at residues 648–668 (IGTSVYCCVVMSVLGLSTSVI). Topologically, residues 669-676 (LQERVNEM) are extracellular. Residues 677–697 (FSLASFFVIFSTTLTLCLVFV) traverse the membrane as a helical segment. Topologically, residues 698 to 842 (PKVIELARNP…VDPDEPSTKL (145 aa)) are cytoplasmic. The segment covering 725 to 740 (AKTSQPMSPQPRSDSS) has biased composition (polar residues). 2 disordered regions span residues 725–744 (AKTS…GDLI) and 791–842 (SPSS…STKL).

It belongs to the G-protein coupled receptor 3 family. In terms of assembly, may form a heterodimer with gbb-1. Expressed in cholinergic motor neurons.

It is found in the cell membrane. Functionally, component of a heterodimeric G-protein coupled receptor for GABA, formed by gbb-1 and gbb-2. Within the heterodimeric GABA receptor, only gbb-1 seems to bind agonists, while gbb-2 mediates coupling to G proteins. Ligand binding causes a conformation change that triggers signaling via guanine nucleotide-binding proteins (G proteins) and modulates the activity of down-stream effectors, such as adenylate cyclase. Signaling inhibits adenylate cyclase, stimulates phospholipase A2, activates potassium channels, inactivates voltage-dependent calcium-channels and modulates inositol phospholipid hydrolysis. Plays a critical role in the fine-tuning of inhibitory synaptic transmission. Pre-synaptic GABA receptor inhibits neurotransmitter release by down-regulating high-voltage activated calcium channels, whereas postsynaptic GABA receptor decreases neuronal excitability by activating a prominent inwardly rectifying potassium (Kir) conductance that underlies the late inhibitory postsynaptic potentials. Along with gbb-1, may couple to the G(o)-alpha G-protein goa-1 to negatively regulate cholinergic receptor activity in the presence of high levels of acetylcholine in ventral cord motor neurons. As acetylcholine depolarizes body wall muscles, modulation of acetylcholine levels most likely results in the control of locomotory behavior. Regulates locomotory behavior in response to GABA release by GABAergic motor neurons. This is Gamma-aminobutyric acid type B receptor subunit 2 from Caenorhabditis elegans.